The primary structure comprises 359 residues: Peptide chain release factor 1 (359 aa).

Gln235 carries the post-translational modification N5-methylglutamine.

Belongs to the prokaryotic/mitochondrial release factor family. Methylated by PrmC. Methylation increases the termination efficiency of RF1.

It is found in the cytoplasm. Functionally, peptide chain release factor 1 directs the termination of translation in response to the peptide chain termination codons UAG and UAA. This Aromatoleum aromaticum (strain DSM 19018 / LMG 30748 / EbN1) (Azoarcus sp. (strain EbN1)) protein is Peptide chain release factor 1.